The chain runs to 665 residues: DNA ligase (665 aa).

NAD(+) is bound by residues 32 to 36, 81 to 82, and glutamate 110; these read DSEYD and SL. Catalysis depends on lysine 112, which acts as the N6-AMP-lysine intermediate. The NAD(+) site is built by arginine 133, glutamate 167, lysine 283, and lysine 307. Cysteine 401, cysteine 404, cysteine 419, and cysteine 424 together coordinate Zn(2+). The BRCT domain occupies 586 to 665; that stretch reads EGHPDFSGKT…AAFIEKQNGI (80 aa).

This sequence belongs to the NAD-dependent DNA ligase family. LigA subfamily. The cofactor is Mg(2+). It depends on Mn(2+) as a cofactor.

The enzyme catalyses NAD(+) + (deoxyribonucleotide)n-3'-hydroxyl + 5'-phospho-(deoxyribonucleotide)m = (deoxyribonucleotide)n+m + AMP + beta-nicotinamide D-nucleotide.. Functionally, DNA ligase that catalyzes the formation of phosphodiester linkages between 5'-phosphoryl and 3'-hydroxyl groups in double-stranded DNA using NAD as a coenzyme and as the energy source for the reaction. It is essential for DNA replication and repair of damaged DNA. This chain is DNA ligase, found in Staphylococcus epidermidis (strain ATCC 35984 / DSM 28319 / BCRC 17069 / CCUG 31568 / BM 3577 / RP62A).